A 50-amino-acid chain; its full sequence is Putative protein HokF (50 aa).

The chain crosses the membrane as a helical span at residues Tyr-5–Gly-25.

The protein belongs to the Hok/Gef family.

It is found in the cell inner membrane. In terms of biological role, toxic component of a type I toxin-antitoxin (TA) system. When overexpressed kills cells within minutes; causes collapse of the transmembrane potential and arrest of respiration. Its toxic effect is probably neutralized by an antisense antitoxin Sok RNA. In Escherichia coli O157:H7, this protein is Putative protein HokF (hokF).